The primary structure comprises 834 residues: MAVEEEGLRVFQSVKIKIGEAKNLPTYPGPNKMRDCYCTVNLDQEEVFRTKVVEKSLCPFYGEDFYCEIPRSFRHLSFYIFDRDVFRRDSIIGKVAIKKEDLQKYHNRDTWFQLQHVDADSEVQGKVHLELRLSEVITDSGVVCHKLATRILECQGLPIVNGQCDPYATVTLAGPCRSEAKKTKVKKKTNNPQFDEVFYFEVTRPCSYSRKSHFDFEDEDVDKLEIRVDLWNASNLKFGDEFLGELRVPLKVLRQSSPHEAWYFLQPRDNGSKSLKPGDLGSLRLNVVYTEDHVFSSDYYSPLRDLLLKSADVEPVSASAAHILGEVCREKQEAAIPLVRLFLHYGRVVPFISAIASAEVRRTQDPNTIFRGNSLTSKCIDETMKLAGMQYLHVTLKPTIEEICQSHKSCEIDPVRLKDGESLESNMENLRQFVDRVFSVITKSGVSCPTVMCDIFFSLREAAAKRFQDDLDVRYTAVSSFIFLRFFAPAILSPNLFQLTPHHTDPQTSRTLTLVSKTIQTLGSLSKSKSASFKESYMAAFYEFFNEQKYADAVKNFLDLISSSGRRDPKSVQQPILLKEGFMIKRAQGRKRFGMKNFKKRWFRLTNHEFTYQKSKGDPPLYSIPIENILAVEPLEEESFKMKNMFQVIQPERALYIQANNCVEAKAWIDILTKVSQCNQKRLAVYHPSAYLNGHWLCCRASSDTAAGCSPCTGGLPANIQLDIDGDRETERIYSLSSSYMSKLETMQEACGSRSVYDGPEQEEYSTFIIDDPQETYKTLKQVVAGVGALEQEHAQYKRDKFRRTKYGSQEHPIGDKSFQSYIRQQSETPAHSM.

C2 domains are found at residues 1–112 and 123–263; these read MAVE…DTWF and VQGK…EAWY. Ala2 carries the N-acetylalanine modification. Tyr66 is subject to Phosphotyrosine. Phosphoserine is present on Ser77. Thr110 bears the Phosphothreonine mark. The Ras-GAP domain occupies 346 to 561; it reads GRVVPFISAI…DAVKNFLDLI (216 aa). The PH domain occupies 576–677; it reads ILLKEGFMIK…WIDILTKVSQ (102 aa). The Btk-type zinc-finger motif lies at 679–715; it reads NQKRLAVYHPSAYLNGHWLCCRASSDTAAGCSPCTGG. Zn(2+)-binding residues include His687, Cys698, Cys699, and Cys709. The disordered stretch occupies residues 806 to 834; the sequence is KYGSQEHPIGDKSFQSYIRQQSETPAHSM. A phosphoserine mark is found at Ser809 and Ser833. Positions 818-834 are enriched in polar residues; the sequence is SFQSYIRQQSETPAHSM.

Its function is as follows. Inhibitory regulator of the Ras-cyclic AMP pathway. May bind inositol tetrakisphosphate (IP4). This chain is Ras GTPase-activating protein 3 (RASA3), found in Bos taurus (Bovine).